The primary structure comprises 508 residues: Cobyric acid synthase (508 aa).

The GATase cobBQ-type domain maps to 249–451 (EVDVAIINLP…IHGIFENSLF (203 aa)). Cys-330 (nucleophile) is an active-site residue. The active site involves His-443.

Belongs to the CobB/CobQ family. CobQ subfamily.

It participates in cofactor biosynthesis; adenosylcobalamin biosynthesis. Functionally, catalyzes amidations at positions B, D, E, and G on adenosylcobyrinic A,C-diamide. NH(2) groups are provided by glutamine, and one molecule of ATP is hydrogenolyzed for each amidation. The protein is Cobyric acid synthase of Caldanaerobacter subterraneus subsp. tengcongensis (strain DSM 15242 / JCM 11007 / NBRC 100824 / MB4) (Thermoanaerobacter tengcongensis).